Reading from the N-terminus, the 186-residue chain is Elongation factor P (186 aa).

The protein belongs to the elongation factor P family.

Its subcellular location is the cytoplasm. It functions in the pathway protein biosynthesis; polypeptide chain elongation. In terms of biological role, involved in peptide bond synthesis. Stimulates efficient translation and peptide-bond synthesis on native or reconstituted 70S ribosomes in vitro. Probably functions indirectly by altering the affinity of the ribosome for aminoacyl-tRNA, thus increasing their reactivity as acceptors for peptidyl transferase. The chain is Elongation factor P from Cupriavidus pinatubonensis (strain JMP 134 / LMG 1197) (Cupriavidus necator (strain JMP 134)).